The chain runs to 565 residues: CTP synthase (565 aa).

The interval 1–272 is amidoligase domain; that stretch reads MARPKNVKHI…DLRVMKKLGL (272 aa). S18 serves as a coordination point for CTP. S18 contributes to the UTP binding site. ATP is bound at residue 19–24; it reads SLGKGI. L-glutamine is bound at residue Y59. D76 is a binding site for ATP. 2 residues coordinate Mg(2+): D76 and E146. Residues 153-155, 193-198, and K229 contribute to the CTP site; these read DIE and KTKPTQ. Residues 193–198 and K229 contribute to the UTP site; that span reads KTKPTQ. Positions 299 to 543 constitute a Glutamine amidotransferase type-1 domain; that stretch reads TIGICGKYTE…VHAAKEFAQG (245 aa). G363 is a binding site for L-glutamine. Residue C390 is the Nucleophile; for glutamine hydrolysis of the active site. L-glutamine is bound by residues 391–394, E414, and R471; that span reads LGMQ. Catalysis depends on residues H516 and E518.

This sequence belongs to the CTP synthase family. As to quaternary structure, homotetramer.

The catalysed reaction is UTP + L-glutamine + ATP + H2O = CTP + L-glutamate + ADP + phosphate + 2 H(+). It carries out the reaction L-glutamine + H2O = L-glutamate + NH4(+). It catalyses the reaction UTP + NH4(+) + ATP = CTP + ADP + phosphate + 2 H(+). Its pathway is pyrimidine metabolism; CTP biosynthesis via de novo pathway; CTP from UDP: step 2/2. With respect to regulation, allosterically activated by GTP, when glutamine is the substrate; GTP has no effect on the reaction when ammonia is the substrate. The allosteric effector GTP functions by stabilizing the protein conformation that binds the tetrahedral intermediate(s) formed during glutamine hydrolysis. Inhibited by the product CTP, via allosteric rather than competitive inhibition. In terms of biological role, catalyzes the ATP-dependent amination of UTP to CTP with either L-glutamine or ammonia as the source of nitrogen. Regulates intracellular CTP levels through interactions with the four ribonucleotide triphosphates. This Chlorobaculum tepidum (strain ATCC 49652 / DSM 12025 / NBRC 103806 / TLS) (Chlorobium tepidum) protein is CTP synthase.